The sequence spans 340 residues: Heat-inducible transcription repressor HrcA (340 aa).

Belongs to the HrcA family.

Negative regulator of class I heat shock genes (grpE-dnaK-dnaJ and groELS operons). Prevents heat-shock induction of these operons. This is Heat-inducible transcription repressor HrcA from Phytoplasma australiense.